The following is a 174-amino-acid chain: Shikimate kinase (174 aa).

15–20 (GTGKST) is an ATP binding site. Mg(2+) is bound at residue Ser-19. Asp-37, Arg-61, and Gly-82 together coordinate substrate. Residue Arg-120 coordinates ATP. Residue Arg-138 participates in substrate binding.

Belongs to the shikimate kinase family. As to quaternary structure, monomer. It depends on Mg(2+) as a cofactor.

The protein resides in the cytoplasm. It catalyses the reaction shikimate + ATP = 3-phosphoshikimate + ADP + H(+). It participates in metabolic intermediate biosynthesis; chorismate biosynthesis; chorismate from D-erythrose 4-phosphate and phosphoenolpyruvate: step 5/7. Functionally, catalyzes the specific phosphorylation of the 3-hydroxyl group of shikimic acid using ATP as a cosubstrate. This chain is Shikimate kinase, found in Staphylococcus aureus (strain MRSA252).